The sequence spans 444 residues: Enolase (444 aa).

His-163 and Glu-172 together coordinate substrate. Glu-215 (proton donor) is an active-site residue. Positions 250, 300, and 327 each coordinate Mg(2+). Glu-300 and Asp-327 together coordinate substrate. The active-site Proton acceptor is Lys-352. Substrate is bound by residues 379 to 382 and Lys-403; that span reads SHRS.

This sequence belongs to the enolase family. As to quaternary structure, homodimer. Mg(2+) is required as a cofactor.

It localises to the cytoplasm. It carries out the reaction (2R)-2-phosphoglycerate = phosphoenolpyruvate + H2O. The protein operates within carbohydrate degradation; glycolysis; pyruvate from D-glyceraldehyde 3-phosphate: step 4/5. In Mesembryanthemum crystallinum (Common ice plant), this protein is Enolase (PGH1).